Reading from the N-terminus, the 102-residue chain is MHVKKGDRVVVLSGREKGREGVIKLSLPKKERVVVENVNIVKKHVKPMGNRQGGILEVEAALHVSKVMLICPACGKPSRTGHRVNDEGKKVRVCKQCNADVA.

It belongs to the universal ribosomal protein uL24 family. As to quaternary structure, part of the 50S ribosomal subunit.

Functionally, one of two assembly initiator proteins, it binds directly to the 5'-end of the 23S rRNA, where it nucleates assembly of the 50S subunit. Its function is as follows. One of the proteins that surrounds the polypeptide exit tunnel on the outside of the subunit. The sequence is that of Large ribosomal subunit protein uL24 from Herpetosiphon aurantiacus (strain ATCC 23779 / DSM 785 / 114-95).